We begin with the raw amino-acid sequence, 100 residues long: Small ribosomal subunit protein uS14c (100 aa).

It belongs to the universal ribosomal protein uS14 family. As to quaternary structure, part of the 30S ribosomal subunit.

It localises to the plastid. The protein resides in the chloroplast. Functionally, binds 16S rRNA, required for the assembly of 30S particles. The polypeptide is Small ribosomal subunit protein uS14c (Lobularia maritima (Sweet alyssum)).